A 273-amino-acid polypeptide reads, in one-letter code: Undecaprenyl-diphosphatase (273 aa).

Transmembrane regions (helical) follow at residues 46–63, 83–103, 109–129, 184–204, 218–238, and 249–269; these read LFEV…CWEY, FVLN…LAGK, LFNS…ILWV, ATEF…AYDL, AFGI…RGLL, and FAWY…YGLV.

It belongs to the UppP family.

The protein resides in the cell inner membrane. The enzyme catalyses di-trans,octa-cis-undecaprenyl diphosphate + H2O = di-trans,octa-cis-undecaprenyl phosphate + phosphate + H(+). Catalyzes the dephosphorylation of undecaprenyl diphosphate (UPP). Confers resistance to bacitracin. The polypeptide is Undecaprenyl-diphosphatase (Methylococcus capsulatus (strain ATCC 33009 / NCIMB 11132 / Bath)).